Reading from the N-terminus, the 465-residue chain is MQLDKKIINHVHCLGIGGIGVSALAEILLKKGCRVTGSDVSPNKNTERLQRLGAEIIFNHDGTAITQADCAVYSSAIGATNPELMAAKQAKIPLLKRGEMLANLMKEYQSIAVAGAHGKTTTSGMLSHAFVEANLDPTFMVGGVLNNSQTPARVGNGHYFIAEADESDASFLFMHPDIAVVTNIDADHLSTYDGDFNRLKQTYIQFLEQTAQDGVVVLCLDDPILREIAPLLSRRVITYGFSSDAQYRVVDYCQQGIQSLFQIHSPQRKAPLTVKLSMPGQHNALNATAVTAIADVVQMNEPALLKSLADFPGVDRRFTIRGEMILPKGNALIIEDYGHHPNEIKATLAAARAAWPERRMVLVFQPHRYSRTRDLMTEFVSVLAETDWLVLLEVYSAGEMPIPGADGMALIKMMSNGMAQKTTFVPLLQNLPETLQKLSQPNDIIILQGAGNIGSIVTALVQTYG.

115 to 121 is an ATP binding site; the sequence is GAHGKTT.

It belongs to the MurCDEF family.

The protein localises to the cytoplasm. The enzyme catalyses UDP-N-acetyl-alpha-D-muramate + L-alanine + ATP = UDP-N-acetyl-alpha-D-muramoyl-L-alanine + ADP + phosphate + H(+). It functions in the pathway cell wall biogenesis; peptidoglycan biosynthesis. Its function is as follows. Cell wall formation. In Coxiella burnetii (strain CbuG_Q212) (Coxiella burnetii (strain Q212)), this protein is UDP-N-acetylmuramate--L-alanine ligase.